Reading from the N-terminus, the 391-residue chain is Aminoacetone oxidase (391 aa).

Residues alanine 14, glutamate 33, isoleucine 134, glutamate 362, asparagine 374, and isoleucine 375 each coordinate FAD.

Belongs to the BaiN/RdsA family. In terms of assembly, monomer. Requires FAD as cofactor.

In terms of biological role, flavoprotein that probably catalyzes the condensation of two molecules of aminoacetone to yield 3,6-dimethyl-2,5-dihydropyrazine, which is subsequently oxidized to 2,5-dimethylpyrazine. It could be involved in a microbial defense mechanism related to aminoacetone catabolism through a pathway yielding dimethylpyrazine derivatives instead of methylglyoxal. It has also low aminoacetone oxidase activity, and can produce hydrogen peroxide from aminoacetone. In addition, it shows very low L-amino acid oxidase activity, and can produce hydrogen peroxide from peptone and from seven amino acids, L-aspartate, L-tryptophan, L-lysine, L-isoleucine, L-arginine, L-asparagine and L-glutamine. It cannot use L-malate, oxaloacetate or alpha-aminobutyrate. Plays a role in antioxidant defense. This is Aminoacetone oxidase from Streptococcus cristatus.